The following is a 413-amino-acid chain: Protein MANNAN SYNTHESIS-RELATED (413 aa).

Over 1 to 5 (MNSME) the chain is Cytoplasmic. The helical; Signal-anchor for type II membrane protein transmembrane segment at 6 to 26 (IRQAFAGLLTLSMFIMLGNMI) threads the bilayer. The Lumenal portion of the chain corresponds to 27–413 (KKDHFDYPAE…KNHLAYKCFC (387 aa)). N-linked (GlcNAc...) asparagine glycosylation occurs at N207. 255–257 (DLR) serves as a coordination point for substrate.

The protein belongs to the glycosyltransferase GT106 family. Highly and specifically expressed in the endosperm.

The protein resides in the golgi apparatus membrane. The protein operates within glycan biosynthesis. Its function is as follows. Glycosyltransferase involved in mannan biosynthesis. In Trigonella foenum-graecum (Fenugreek), this protein is Protein MANNAN SYNTHESIS-RELATED.